We begin with the raw amino-acid sequence, 183 residues long: Alkyl hydroperoxide reductase AhpD (183 aa).

Cys132 (proton donor) is an active-site residue. Residues Cys132 and Cys135 are joined by a disulfide bond. Residue Cys135 is the Cysteine sulfenic acid (-SOH) intermediate of the active site.

It belongs to the AhpD family.

It catalyses the reaction N(6)-[(R)-dihydrolipoyl]-L-lysyl-[lipoyl-carrier protein] + a hydroperoxide = N(6)-[(R)-lipoyl]-L-lysyl-[lipoyl-carrier protein] + an alcohol + H2O. Antioxidant protein with alkyl hydroperoxidase activity. Required for the reduction of the AhpC active site cysteine residues and for the regeneration of the AhpC enzyme activity. This Acidobacterium capsulatum (strain ATCC 51196 / DSM 11244 / BCRC 80197 / JCM 7670 / NBRC 15755 / NCIMB 13165 / 161) protein is Alkyl hydroperoxide reductase AhpD.